The sequence spans 276 residues: Large ribosomal subunit protein uL2c (276 aa).

Disordered regions lie at residues 1–51 (MAIR…GIIT) and 224–276 (VVMN…RRRK). 2 stretches are compositionally biased toward polar residues: residues 7–18 (RTYTPSTRNRPI) and 27–37 (SNPQKKLTSGQ).

This sequence belongs to the universal ribosomal protein uL2 family. As to quaternary structure, part of the 50S ribosomal subunit.

Its subcellular location is the plastid. It localises to the chloroplast. The chain is Large ribosomal subunit protein uL2c (rpl2) from Cycas taitungensis (Prince sago).